The following is a 504-amino-acid chain: O-fucosyltransferase 39 (504 aa).

Residues 11-27 (WILSMFFFVVLFCNNVS) form a helical; Signal-anchor for type II membrane protein membrane-spanning segment. N115 is a glycosylation site (N-linked (GlcNAc...) asparagine). A substrate-binding site is contributed by 288–290 (HLR). Residues N359 and N460 are each glycosylated (N-linked (GlcNAc...) asparagine).

Belongs to the glycosyltransferase GT106 family.

It is found in the membrane. It participates in glycan metabolism. This Arabidopsis thaliana (Mouse-ear cress) protein is O-fucosyltransferase 39.